Here is a 104-residue protein sequence, read N- to C-terminus: Small ribosomal subunit protein uS10 (104 aa).

Belongs to the universal ribosomal protein uS10 family. Part of the 30S ribosomal subunit.

Its function is as follows. Involved in the binding of tRNA to the ribosomes. This chain is Small ribosomal subunit protein uS10, found in Nitrosococcus oceani (strain ATCC 19707 / BCRC 17464 / JCM 30415 / NCIMB 11848 / C-107).